The primary structure comprises 359 residues: Guanine nucleotide-binding protein G(o) subunit alpha (359 aa).

The segment at 1 to 26 is disordered; it reads MGGCVSATPEEREAKTRSSVIDRQQR. Gly-2 is lipidated: N-myristoyl glycine. A lipid anchor (S-palmitoyl cysteine) is attached at Cys-4. The G-alpha domain maps to 34–359; it reads NTIKILLLGA…RENLEAANLL (326 aa). The segment at 37-50 is G1 motif; sequence KILLLGAGESGKST. Residues 42 to 49, 178 to 184, 203 to 207, 272 to 275, and Ala-331 contribute to the GTP site; these read GAGESGKS, LRSRVQT, DVGGQ, and NKAD. Mg(2+)-binding residues include Ser-49 and Thr-184. The tract at residues 176 to 184 is G2 motif; it reads DVLRSRVQT. The interval 199–208 is G3 motif; the sequence is YRVVDVGGQR. Positions 268 to 275 are G4 motif; that stretch reads ILFLNKAD. Residues 329–334 form a G5 motif region; it reads TTATDT.

The protein belongs to the G-alpha family. G(i/o/t/z) subfamily. In terms of assembly, g proteins are composed of 3 units; alpha, beta and gamma. The alpha chain contains the guanine nucleotide binding site.

In terms of biological role, guanine nucleotide-binding proteins (G proteins) are involved as modulators or transducers in various transmembrane signaling systems. The G(o) protein function is not clear. In Geodia cydonium (Sponge), this protein is Guanine nucleotide-binding protein G(o) subunit alpha.